The primary structure comprises 623 residues: Activator of C kinase protein 1 (623 aa).

Residues 141–230 (KESLGSPAVQ…GSSGGEDKLS (90 aa)) form a disordered region. The span at 152 to 161 (ASISSGNRIS) shows a compositional bias: polar residues. Residues 176–193 (SESRILQEKVYRTEEKAP) show a composition bias toward basic and acidic residues. Residues K184 and K191 each participate in a glycyl lysine isopeptide (Lys-Gly) (interchain with G-Cter in ubiquitin) cross-link. Polar residues predominate over residues 206-215 (KINQPPTGSA). Sel1-like repeat units follow at residues 318 to 361 (PPAM…KLNN), 408 to 444 (SACMYKLGMSHLYGLNMQKTDVLLAIKWFDKAAQKGD), 495 to 531 (PLAQWKLGNCYEFGDLGLPVVAKKSIYWYSKAAAAQP), and 576 to 611 (ARTEFALGFYYEKGVGCEVDLDLAKQYYQRAARMGF).

The protein is Activator of C kinase protein 1 (ACK1) of Saccharomyces cerevisiae (strain ATCC 204508 / S288c) (Baker's yeast).